A 308-amino-acid polypeptide reads, in one-letter code: Transaldolase (308 aa).

Lysine 125 (schiff-base intermediate with substrate) is an active-site residue.

It belongs to the transaldolase family. Type 1 subfamily. In terms of assembly, homodimer.

It is found in the cytoplasm. It carries out the reaction D-sedoheptulose 7-phosphate + D-glyceraldehyde 3-phosphate = D-erythrose 4-phosphate + beta-D-fructose 6-phosphate. It functions in the pathway carbohydrate degradation; pentose phosphate pathway; D-glyceraldehyde 3-phosphate and beta-D-fructose 6-phosphate from D-ribose 5-phosphate and D-xylulose 5-phosphate (non-oxidative stage): step 2/3. Transaldolase is important for the balance of metabolites in the pentose-phosphate pathway. The sequence is that of Transaldolase from Pseudomonas savastanoi pv. phaseolicola (strain 1448A / Race 6) (Pseudomonas syringae pv. phaseolicola (strain 1448A / Race 6)).